We begin with the raw amino-acid sequence, 1641 residues long: Cortactin-binding protein 2 (1641 aa).

Positions 1–27 (MATDGASCEPDFSRAPEDAAGAPAEAA) are disordered. The stretch at 119-276 (RKMQERMSTQ…EQLKRGNDSK (158 aa)) forms a coiled coil. 3 disordered regions span residues 361–433 (SHGD…HPGL), 446–472 (GSNANDPDQNGNTTQSPPSRDVSPTSR), and 488–588 (ALSR…PQGN). The segment covering 385–405 (GPSTGSTPDLTSSPTALPSTV) has biased composition (polar residues). Position 491 is an asymmetric dimethylarginine (Arg-491). Residues 497–506 (AGAPPRPGAP) are compositionally biased toward pro residues. The segment covering 576–586 (TVASSPSSLPQ) has biased composition (polar residues). 6 ANK repeats span residues 702–732 (GRPTLLQQAAAQGNVTLLSMLLNEEGLDINY), 736–765 (DGHSALYSAAKNGHTDCVRLLLNAEAQVNA), 769–798 (NGFTPLCAAAAQGHFKCVELLIAYDANINH), 802–831 (GGQTPLYLACKNGNKECIKLLLEAGTDRSV), 835–864 (DGWTPIHAAVDTGNVDSLKLLMYHGAPAHG), and 903–933 (EGWTAAHIAASKGFKNCLEVLCRHGGLEPER). Residues 1442 to 1468 (AWRKVSTSPRKKSGRFSSPTWNKPDLS) form a disordered region. Position 1512 is a phosphoserine (Ser-1512). The tract at residues 1544–1641 (LRRFDSSGNN…NSRDLEPTQK (98 aa)) is disordered. Polar residues-rich tracts occupy residues 1551–1562 (GNNPVFSATVNN) and 1570–1579 (KEVSPLSSHQ). Residues 1580-1590 (MTERSNSKSKT) are compositionally biased toward basic and acidic residues. The span at 1612 to 1626 (SQNTKRSSSSSNTRQ) shows a compositional bias: low complexity.

In terms of assembly, interacts with CTTN/cortactin SH3 domain. Interacts with STRN, STRN4/zinedin and MOB4/phocein; this interactions mediate the association with the STRIPAK core complex and may regulate dendritic spine distribution of the STRIPAK complex in hippocampal neurons. Activation of glutamate receptors weakens the interaction with STRN and STRN4.

The protein localises to the cytoplasm. It localises to the cell cortex. The protein resides in the cell projection. It is found in the dendritic spine. Regulates the dendritic spine distribution of CTTN/cortactin in hippocampal neurons, and thus controls dendritic spinogenesis and dendritic spine maintenance. Associates with the striatin-interacting phosphatase and kinase (STRIPAK) core complex to regulate dendritic spine distribution of the STRIPAK complex in hippocampal neurons. In Ovis aries (Sheep), this protein is Cortactin-binding protein 2 (CTTNBP2).